A 354-amino-acid chain; its full sequence is MLVLGIESSCDETGVALYDTERGLRAHCLHTQMAMHAEYGGVVPELASRDHIRRLVPLTEGCLAQAGASYGDIDAVAFTQGPGLGGALLAGSSYANALALALDKPVIPVHHLEGHLLSPLLAEEKPDFPFVALLVSGGHTQIMAVRGIGDYALLGESVDDAAGEAFDKTAKLLGLLYPGGAKLSELAESGRFEAFVFPRPMIHSDDLQMSFSGLKTAVLTAVEKVRAENGADDIPEQTRNDICRAFQDAVVDVLAAKVKKALLQTGFRTVVVAGGVGANRKLRETFGNMTVQIPTPKGKPKHPSEKVSVFFPPTAYCTDNGAMIAFAGAMHLGKGREVGAFNVRPRWPLSEIVR.

Fe cation contacts are provided by His-111 and His-115. Residues Leu-134–Gly-138, Asp-167, Gly-180, and Asn-279 each bind substrate. Asp-319 provides a ligand contact to Fe cation.

Belongs to the KAE1 / TsaD family. Requires Fe(2+) as cofactor.

It localises to the cytoplasm. It catalyses the reaction L-threonylcarbamoyladenylate + adenosine(37) in tRNA = N(6)-L-threonylcarbamoyladenosine(37) in tRNA + AMP + H(+). In terms of biological role, required for the formation of a threonylcarbamoyl group on adenosine at position 37 (t(6)A37) in tRNAs that read codons beginning with adenine. Is involved in the transfer of the threonylcarbamoyl moiety of threonylcarbamoyl-AMP (TC-AMP) to the N6 group of A37, together with TsaE and TsaB. TsaD likely plays a direct catalytic role in this reaction. The sequence is that of tRNA N6-adenosine threonylcarbamoyltransferase from Neisseria meningitidis serogroup B (strain ATCC BAA-335 / MC58).